A 334-amino-acid chain; its full sequence is MGSIGSIGKPIEGFLVAAIQFPVPIVNSKKDIENNVQSIIRTLHATKAGYPGVELIIFPEYSTQGLNTAKWLSEEFLLDVGGKETEAYAQACKEAKVYGVFSIMERNPDPNKNPYNTAIIINPKGEIILHYRKLFPWNPIEPWYPGDKGMPVCDGPGGSKLAVCICHDGMIPELAREAAYKGCNVYIRISGYSTQVNDQWILTNRSNAWHNLMYTVSVNLAGYDNVFYYFGEGQICNFDGTTLVQGHRNPWEIVTGEIYPKMADNARLSWGLENNIYNLGHRGYVAKPGGEPDAGLTYIKDLAASKYKLPWEDHMQIKDGSIYGYPTSGGRFGK.

Residues 14-260 (FLVAAIQFPV…WEIVTGEIYP (247 aa)) form the CN hydrolase domain. Glu-60 serves as the catalytic Proton acceptor. Lys-133 functions as the Proton donor in the catalytic mechanism. Cys-166 (nucleophile) is an active-site residue.

Belongs to the carbon-nitrogen hydrolase superfamily. Aliphatic amidase family.

It carries out the reaction formamide + H2O = formate + NH4(+). Functionally, is an aliphatic amidase with a restricted substrate specificity, as it only hydrolyzes formamide. This chain is Formamidase, found in Helicobacter acinonychis (strain Sheeba).